We begin with the raw amino-acid sequence, 800 residues long: Phenylalanine--tRNA ligase beta subunit (800 aa).

Residues 39 to 154 (TKDIKNLVVG…ESQVPGTDAL (116 aa)) form the tRNA-binding domain. The region spanning 408 to 483 (AFITPIDITA…RIYGYDDIPS (76 aa)) is the B5 domain. Mg(2+) contacts are provided by Asp461, Asp467, Glu470, and Glu471. The region spanning 708-800 (PRFPGMSRDI…ALIEQGAVIR (93 aa)) is the FDX-ACB domain.

Belongs to the phenylalanyl-tRNA synthetase beta subunit family. Type 1 subfamily. In terms of assembly, tetramer of two alpha and two beta subunits. Mg(2+) serves as cofactor.

Its subcellular location is the cytoplasm. It carries out the reaction tRNA(Phe) + L-phenylalanine + ATP = L-phenylalanyl-tRNA(Phe) + AMP + diphosphate + H(+). This is Phenylalanine--tRNA ligase beta subunit from Staphylococcus aureus.